The chain runs to 1117 residues: Cytospin-A (1117 aa).

Disordered regions lie at residues 1–176 (MKKA…NQIS), 293–323 (SLSP…GSVE), and 358–390 (SSDD…NASE). Composition is skewed to low complexity over residues 45 to 72 (TTAS…TNGV) and 99 to 119 (KIST…NKES). Basic and acidic residues-rich tracts occupy residues 120–131 (SSTRERLRERTR) and 158–171 (TTTE…KSKS). The stretch at 168 to 280 (KSKSDNQISD…LNALGFSLEQ (113 aa)) forms a coiled coil. A compositionally biased stretch (polar residues) spans 293-303 (SLSPEITPGNQ). The span at 358–377 (SSDDALDAPSSSESEGIPSI) shows a compositional bias: low complexity. A phosphoserine mark is found at Ser384, Ser385, and Ser389. 2 coiled-coil regions span residues 394–449 (ACLT…MESL) and 487–807 (RYME…RGRV). Residues 852-878 (SQVPNPTAAAIPRTPLSPSPMKTPPAA) are disordered. Residues Ser868, Ser881, and Ser887 each carry the phosphoserine modification. Residues 920–997 (TSSTSRPASL…PTTRSRIREE (78 aa)) form a disordered region. The span at 946–956 (RSSEEMKRDIS) shows a compositional bias: basic and acidic residues. Low complexity predominate over residues 971 to 990 (TTSPQLSLSSSPTASVTPTT). One can recognise a Calponin-homology (CH) domain in the interval 1011 to 1116 (GSKRNALLKW…YVTAIYKYFE (106 aa)).

This sequence belongs to the cytospin-A family. As to quaternary structure, may interact with both microtubules and actin cytoskeleton.

The protein localises to the cytoplasm. It localises to the cytoskeleton. Its subcellular location is the spindle. It is found in the cell junction. The protein resides in the gap junction. In terms of biological role, involved in cytokinesis and spindle organization. May play a role in actin cytoskeleton organization and microtubule stabilization and hence required for proper cell adhesion and migration. This chain is Cytospin-A (SPECC1L), found in Canis lupus familiaris (Dog).